We begin with the raw amino-acid sequence, 238 residues long: Sugar fermentation stimulation protein homolog (238 aa).

This sequence belongs to the SfsA family.

In Vibrio vulnificus (strain CMCP6), this protein is Sugar fermentation stimulation protein homolog.